The primary structure comprises 242 residues: MLSCFRLLSRHISPSLASLRPVRCCFALPLRWAPGRPLDPRQIAPRRPLAAAASSRDPTGPAAGPSRVRQNFHPDSEAAINRQINLELYASYVYLSMAYYFSRDDVALNNFSRYFLHQSREETEHAEKLMRLQNQRGGRIRLQDIKKPEQDDWESGLHAMECALLLEKNVNQSLLELHALASDKGDPHLCDFLETYYLNEQVKSIKELGDHVHNLVKMGAPDAGLAEYLFDTHTLGNENKQN.

A mitochondrion-targeting transit peptide spans M1–L49. The span at R47–P58 shows a compositional bias: low complexity. The segment at R47–N71 is disordered. The Ferritin-like diiron domain occupies Q70–G219. Fe cation is bound by residues E87, E122, H125, E167, and Q201.

The protein belongs to the ferritin family. In terms of assembly, homooligomer of 24 subunits. The functional molecule is roughly spherical and contains a central cavity into which the polymeric mineral iron core is deposited. In terms of tissue distribution, detected in testis and erythroleukemia. Expression is very low or not detectable in brain, colon, heart, kidney, liver, lung, muscle, placental, spleen and small intestine.

Its subcellular location is the mitochondrion. It catalyses the reaction 4 Fe(2+) + O2 + 4 H(+) = 4 Fe(3+) + 2 H2O. Catalyzes the oxidation of ferrous iron(II) to ferric iron(III) and stores iron in a soluble, non-toxic, readily available form. Important for iron homeostasis. Iron is taken up in the ferrous form and deposited as ferric hydroxides after oxidation. The chain is Ferritin, mitochondrial from Homo sapiens (Human).